A 228-amino-acid chain; its full sequence is DNA mismatch repair protein MutH (228 aa).

Belongs to the MutH family.

The protein localises to the cytoplasm. Sequence-specific endonuclease that cleaves unmethylated GATC sequences. It is involved in DNA mismatch repair. The polypeptide is DNA mismatch repair protein MutH (Yersinia pseudotuberculosis serotype O:1b (strain IP 31758)).